The following is a 433-amino-acid chain: Sulfhydrylase FUB7 (433 aa).

At Lys-211 the chain carries N6-(pyridoxal phosphate)lysine.

It belongs to the trans-sulfuration enzymes family. Pyridoxal 5'-phosphate is required as a cofactor.

It functions in the pathway mycotoxin biosynthesis. Functionally, sulfhydrylase; part of the gene cluster that mediates the biosynthesis of fusaric acid, a mycotoxin with low to moderate toxicity to animals and humans, but with high phytotoxic properties. L-aspartate is suggested as fusaric acid amino acid precursor that is activated and further processed to O-acetyl-L-homoserine by cluster enzymes aspartate kinase FUB3 and homoserine O-acetyltransferase FUB5, as well as enzymes of the primary metabolism. The polyketide synthase (PKS) FUB1 generates the triketide trans-2-hexenal which is presumptively released by the hydrolase FUB4 and linked to the NRPS-bound amino acid precursor by NAD(P)-dependent dehydrogenase FUB6. FUB1, FUB4, and the non-canonical NRPS Fub8 may form an enzyme complex. Further processing of the NRPS-bound intermediate might be carried out by FUB6 and the O-acetylhomoserine FUB7, enabling a spontaneous electrocyclization to close the carbon backbone of fusaric acid. Dihydrofusaric acid is likely to be released via reduction by the thioester reductase (TR) domain of FUB8 whereupon the final oxidation to fusaric acid may (also) be performed by the FMN-dependent dehydrogenase FUB9. This is Sulfhydrylase FUB7 from Gibberella moniliformis (strain M3125 / FGSC 7600) (Maize ear and stalk rot fungus).